Reading from the N-terminus, the 459-residue chain is 2-(3-amino-3-carboxypropyl)histidine synthase subunit 1 (459 aa).

Positions 1–68 (MEDDRAQVDL…AGANTSIEDS (68 aa)) are disordered. Over residues 41–61 (SAAAGKSSSSSSNSTSQPAGA) the composition is skewed to low complexity. C165, C268, and C403 together coordinate [4Fe-4S] cluster.

This sequence belongs to the DPH1/DPH2 family. DPH1 subfamily. Component of the 2-(3-amino-3-carboxypropyl)histidine synthase complex composed of dph-1, dph-2, dph-3 and a NADH-dependent reductase, predominantly cbr-1. [4Fe-4S] cluster serves as cofactor.

It is found in the cytoplasm. The enzyme catalyses L-histidyl-[translation elongation factor 2] + S-adenosyl-L-methionine = 2-[(3S)-amino-3-carboxypropyl]-L-histidyl-[translation elongation factor 2] + S-methyl-5'-thioadenosine + H(+). The protein operates within protein modification; peptidyl-diphthamide biosynthesis. In terms of biological role, catalyzes the first step of diphthamide biosynthesis, a post-translational modification of histidine which occurs in elongation factor 2. Dph-1 and dph-2 transfer a 3-amino-3-carboxypropyl (ACP) group from S-adenosyl-L-methionine (SAM) to a histidine residue, the reaction is assisted by a reduction system comprising dph-3 and a NADH-dependent reductase, predominantly cbr-1. In Neurospora crassa (strain ATCC 24698 / 74-OR23-1A / CBS 708.71 / DSM 1257 / FGSC 987), this protein is 2-(3-amino-3-carboxypropyl)histidine synthase subunit 1 (dph-1).